The following is a 413-amino-acid chain: Multidrug resistance protein MdtA (413 aa).

The first 20 residues, 1-20, serve as a signal peptide directing secretion; it reads MKGSNTFRWAIAIGVVVAAA. 2 disordered regions span residues 31 to 57 and 391 to 413; these read SPTA…RDGP and EPQT…GARA. Residues 397-413 show a composition bias toward basic and acidic residues; it reads ADEKSPSRHEGQKGARA.

Belongs to the membrane fusion protein (MFP) (TC 8.A.1) family. As to quaternary structure, part of a tripartite efflux system composed of MdtA, MdtB and MdtC.

The protein localises to the cell inner membrane. The polypeptide is Multidrug resistance protein MdtA (Salmonella paratyphi C (strain RKS4594)).